The primary structure comprises 482 residues: Glutamate-rich WD repeat-containing protein 1 (482 aa).

2 disordered regions span residues Met1–Gly75 and Gln148–Asp180. 2 stretches are compositionally biased toward acidic residues: residues Asn27–Gly63 and Glu157–Asp180. 5 WD repeats span residues Asn191 to Asp231, Gly294 to Thr334, Ala337 to Pro377, Tyr383 to Glu423, and Gln446 to Glu482.

It localises to the nucleus. The protein resides in the nucleolus. In Dictyostelium discoideum (Social amoeba), this protein is Glutamate-rich WD repeat-containing protein 1 (grwd1).